The sequence spans 194 residues: MKNIILASASERRQELLKRILEDFQIIVSDFDESSIPFKDNISSYVMNLAEGKARSVSKKIMDQDNNLVIGCDTLVAFNNKILGKPKDKKDAFEMLQALSGNEHEVYSGLAILDIKSNKIIKDFVCTKVKFSKLTSLQIEKYVNTGDPMDKAGAYGIQGKAGVFVENINGCYYNVVGLPLNKLNSMLMEMGVNL.

The Proton acceptor role is filled by Asp-73.

It belongs to the Maf family. YhdE subfamily. A divalent metal cation serves as cofactor.

It localises to the cytoplasm. It catalyses the reaction dTTP + H2O = dTMP + diphosphate + H(+). The catalysed reaction is UTP + H2O = UMP + diphosphate + H(+). In terms of biological role, nucleoside triphosphate pyrophosphatase that hydrolyzes dTTP and UTP. May have a dual role in cell division arrest and in preventing the incorporation of modified nucleotides into cellular nucleic acids. This chain is dTTP/UTP pyrophosphatase, found in Clostridium botulinum (strain Okra / Type B1).